A 156-amino-acid chain; its full sequence is Inorganic triphosphatase (156 aa).

Residues 2–148 (GKEIEKKFIV…PRYLNSNLVK (147 aa)) form the CYTH domain. Tyr-29 serves as the catalytic Proton acceptor.

In terms of assembly, homodimer.

It carries out the reaction triphosphate + H2O = phosphate + diphosphate. The enzyme catalyses ATP + H2O = ADP + phosphate + H(+). Functionally, involved in the hydrolysis of the beta-gamma-phosphoanhydride linkage of triphosphate-containing substrates (inorganic or nucleoside-linked). Catalyzes vigorously the hydrolysis of inorganic triphosphate (PPPi), however it can also catalyze the hydrolysis of ATP to ADP and phosphate. It can use ribonucleotides such as GTP, CTP, or UTP and deoxynucleotides such as dATP, dGTP, dCTP, and dTTP. The protein is Inorganic triphosphatase of Acetivibrio thermocellus (strain ATCC 27405 / DSM 1237 / JCM 9322 / NBRC 103400 / NCIMB 10682 / NRRL B-4536 / VPI 7372) (Clostridium thermocellum).